Consider the following 114-residue polypeptide: Flagellar transcriptional regulator FlhD (114 aa).

Belongs to the FlhD family. In terms of assembly, homodimer; disulfide-linked. Forms a heterohexamer composed of two FlhC and four FlhD subunits. Each FlhC binds a FlhD dimer, forming a heterotrimer, and a hexamer assembles by dimerization of two heterotrimers.

The protein resides in the cytoplasm. Functionally, functions in complex with FlhC as a master transcriptional regulator that regulates transcription of several flagellar and non-flagellar operons by binding to their promoter region. Activates expression of class 2 flagellar genes, including fliA, which is a flagellum-specific sigma factor that turns on the class 3 genes. Also regulates genes whose products function in a variety of physiological pathways. In Wigglesworthia glossinidia brevipalpis, this protein is Flagellar transcriptional regulator FlhD.